A 366-amino-acid polypeptide reads, in one-letter code: Rab9 effector protein with kelch motifs (366 aa).

Kelch repeat units lie at residues 49-95 (KILI…FISA), 100-146 (NIWV…TSSA), 151-200 (KLYV…VLTA), 204-253 (KLFV…AWKS), 254-303 (YIYI…LLPW), and 343-366 (LCFI…TILQ).

Rab9 effector required for endosome to trans-Golgi network (TGN) transport. The sequence is that of Rab9 effector protein with kelch motifs (rabepk) from Xenopus laevis (African clawed frog).